A 396-amino-acid polypeptide reads, in one-letter code: MTVRLILAKGREKSLLRRHPWIFSGAVQRLEGDALSGETIDILDSQGKWLARAAYSPESQILARVWTFQQDEVIDCAFFIRRLQQAQNWRDWLAQRDGLNGYRLIAGESDGLPGITIDRFQNFLVLQLLSAGAEYQRETLVSALQHCYPECSIYDRSDVSVRKKEGLPLTQGLICGEMPPALLPISENGMQLFVDIQQGHKTGFYLDQRDSRLAARNYANGRRVLNCFSYTGAFAVAALMGNCQQVISVDTSQSVLDIAKQNIELNQLDLSKTEFVRDDVFQLLRSYRAQGEKFDLIIMDPPKFVENKSQLASACRGYKDINMLAIQLLRPGGILLSFSCSGLMPVDLFQKILADAALDAGHDIQFIEQFRQAADHPVIAAYPEGLYLKGFACRVM.

The 80-residue stretch at 2-81 folds into the PUA domain; it reads TVRLILAKGR…EVIDCAFFIR (80 aa).

This sequence belongs to the methyltransferase superfamily. RlmI family.

It localises to the cytoplasm. It catalyses the reaction cytidine(1962) in 23S rRNA + S-adenosyl-L-methionine = 5-methylcytidine(1962) in 23S rRNA + S-adenosyl-L-homocysteine + H(+). Its function is as follows. Specifically methylates the cytosine at position 1962 (m5C1962) of 23S rRNA. In Yersinia pestis bv. Antiqua (strain Antiqua), this protein is Ribosomal RNA large subunit methyltransferase I.